Consider the following 678-residue polypeptide: Putative cyclic nucleotide-gated ion channel 15 (678 aa).

Over 1 to 81 (MGYGNSRSVR…RGQTIRRWNK (81 aa)) the chain is Cytoplasmic. The chain crosses the membrane as a helical span at residues 82-102 (IFLIACLVSLFVDPLFFFLPV). Residues 103–115 (MRNEACITIGVRL) lie on the Extracellular side of the membrane. Residues 116 to 136 (EVVLTLIRSLADAFYIAQILI) form a helical membrane-spanning segment. The Cytoplasmic portion of the chain corresponds to 137 to 170 (RFRTAYIAPPSRVFGRGELVIDSRKIAWRYLHKS). Residues 171-191 (FWIHLVAALPLPQVLIWIIIP) form a helical membrane-spanning segment. Residues 192–203 (NLRGSPMTNTKN) lie on the Extracellular side of the membrane. A helical transmembrane segment spans residues 204-224 (VLRFIIIFQYVPRMFLIFPLS). Over 225–245 (RQIIKATGVVTETAWAGAAYN) the chain is Cytoplasmic. The chain crosses the membrane as a helical span at residues 246–266 (LMLYMLASHVLGACWYLLAVE). The Extracellular portion of the chain corresponds to 267-364 (RQEACWRHAC…GQNLATSTYA (98 aa)). A helical membrane pass occupies residues 365–385 (GEILFAIIIATLGLVLFALLI). The Cytoplasmic segment spans residues 386–678 (GNMQTYLQST…KPVEPDFSSE (293 aa)). A nucleoside 3',5'-cyclic phosphate is bound by residues 471-595 (LFDQ…TKQL) and E542. A calmodulin-binding region spans residues 587-602 (FRRLHTKQLRHKFRFY). One can recognise an IQ domain in the interval 607 to 638 (RTWAACFIQAAWRRHRKRKYKTELRAKEEFHY). Residues 656–668 (RSGSDSGMMSSIQ) show a composition bias toward polar residues. The tract at residues 656-678 (RSGSDSGMMSSIQKPVEPDFSSE) is disordered.

The protein belongs to the cyclic nucleotide-gated cation channel (TC 1.A.1.5) family. As to quaternary structure, homotetramer or heterotetramer.

The protein localises to the cell membrane. Functionally, putative cyclic nucleotide-gated ion channel. This Arabidopsis thaliana (Mouse-ear cress) protein is Putative cyclic nucleotide-gated ion channel 15 (CNGC15).